The primary structure comprises 308 residues: Ribose 1,5-bisphosphate isomerase (308 aa).

Substrate contacts are provided by residues 24–27 (RGAG) and Arg-67. Cys-129 serves as the catalytic Proton acceptor. Asp-198 serves as the catalytic Proton donor. Substrate-binding positions include 208–209 (NK) and Lys-234.

Belongs to the eIF-2B alpha/beta/delta subunits family. R15P isomerase subfamily.

The catalysed reaction is alpha-D-ribose 1,5-bisphosphate = D-ribulose 1,5-bisphosphate. In terms of biological role, catalyzes the isomerization of ribose 1,5-bisphosphate (R15P) to ribulose 1,5-bisphosphate (RuBP), the CO(2) acceptor and substrate for RubisCO. Functions in an archaeal AMP degradation pathway, together with AMP phosphorylase and RubisCO. The polypeptide is Ribose 1,5-bisphosphate isomerase (Methanocaldococcus jannaschii (strain ATCC 43067 / DSM 2661 / JAL-1 / JCM 10045 / NBRC 100440) (Methanococcus jannaschii)).